Reading from the N-terminus, the 324-residue chain is tRNA N6-adenosine threonylcarbamoyltransferase (324 aa).

Residues His-107, His-111, and Tyr-127 each contribute to the Fe cation site. Substrate is bound by residues 127–131, Asp-159, Gly-172, Glu-176, and Asn-257; that span reads YVSGG. Asp-285 is a binding site for Fe cation.

The protein belongs to the KAE1 / TsaD family. In terms of assembly, monomer. Component of the KEOPS complex that consists of Kae1, Bud32, Cgi121 and Pcc1; the whole complex dimerizes. It depends on Fe(2+) as a cofactor.

It localises to the cytoplasm. It carries out the reaction L-threonylcarbamoyladenylate + adenosine(37) in tRNA = N(6)-L-threonylcarbamoyladenosine(37) in tRNA + AMP + H(+). Required for the formation of a threonylcarbamoyl group on adenosine at position 37 (t(6)A37) in tRNAs that read codons beginning with adenine. Is a component of the KEOPS complex that is probably involved in the transfer of the threonylcarbamoyl moiety of threonylcarbamoyl-AMP (TC-AMP) to the N6 group of A37. Kae1 likely plays a direct catalytic role in this reaction, but requires other protein(s) of the complex to fulfill this activity. The chain is tRNA N6-adenosine threonylcarbamoyltransferase from Pyrococcus horikoshii (strain ATCC 700860 / DSM 12428 / JCM 9974 / NBRC 100139 / OT-3).